The following is a 116-amino-acid chain: Peptidyl-tRNA hydrolase (116 aa).

The protein belongs to the PTH2 family.

The protein resides in the cytoplasm. The catalysed reaction is an N-acyl-L-alpha-aminoacyl-tRNA + H2O = an N-acyl-L-amino acid + a tRNA + H(+). Functionally, the natural substrate for this enzyme may be peptidyl-tRNAs which drop off the ribosome during protein synthesis. The sequence is that of Peptidyl-tRNA hydrolase from Methanococcus maripaludis (strain C7 / ATCC BAA-1331).